A 355-amino-acid chain; its full sequence is 3-dehydroquinate synthase (355 aa).

NAD(+) contacts are provided by residues 71-76 (EGEASK), 105-109 (GVVGD), 129-130 (TS), lysine 142, and lysine 151. 3 residues coordinate Zn(2+): glutamate 184, histidine 246, and histidine 263.

The protein belongs to the sugar phosphate cyclases superfamily. Dehydroquinate synthase family. It depends on Co(2+) as a cofactor. Zn(2+) is required as a cofactor. Requires NAD(+) as cofactor.

It is found in the cytoplasm. It catalyses the reaction 7-phospho-2-dehydro-3-deoxy-D-arabino-heptonate = 3-dehydroquinate + phosphate. Its pathway is metabolic intermediate biosynthesis; chorismate biosynthesis; chorismate from D-erythrose 4-phosphate and phosphoenolpyruvate: step 2/7. Its function is as follows. Catalyzes the conversion of 3-deoxy-D-arabino-heptulosonate 7-phosphate (DAHP) to dehydroquinate (DHQ). This Streptococcus sanguinis (strain SK36) protein is 3-dehydroquinate synthase.